We begin with the raw amino-acid sequence, 215 residues long: LexA repressor (215 aa).

The H-T-H motif DNA-binding region spans 28–48; sequence RAEIAAELGFSSPNAAEEHLR. Catalysis depends on for autocatalytic cleavage activity residues S133 and K170.

This sequence belongs to the peptidase S24 family. Homodimer.

It catalyses the reaction Hydrolysis of Ala-|-Gly bond in repressor LexA.. Functionally, represses a number of genes involved in the response to DNA damage (SOS response), including recA and lexA. In the presence of single-stranded DNA, RecA interacts with LexA causing an autocatalytic cleavage which disrupts the DNA-binding part of LexA, leading to derepression of the SOS regulon and eventually DNA repair. In Burkholderia cenocepacia (strain ATCC BAA-245 / DSM 16553 / LMG 16656 / NCTC 13227 / J2315 / CF5610) (Burkholderia cepacia (strain J2315)), this protein is LexA repressor.